Here is a 510-residue protein sequence, read N- to C-terminus: Ectonucleoside triphosphate diphosphohydrolase 1 (510 aa).

Topologically, residues 1–16 (MEDIKDSKVKRFCSKN) are cytoplasmic. Residues 17-37 (ILIILGFTSILAVIALIAVGL) traverse the membrane as a helical segment. At 38 to 478 (TQNKPLPENV…SPPLPHSTYI (441 aa)) the chain is on the extracellular side. Asn73 is a glycosylation site (N-linked (GlcNAc...) asparagine). An intrachain disulfide couples Cys84 to Cys108. Residue Glu174 is the Proton acceptor of the active site. Residues Asn226, Asn291, and Asn333 are each glycosylated (N-linked (GlcNAc...) asparagine). Cystine bridges form between Cys254–Cys300 and Cys281–Cys324. 2 cysteine pairs are disulfide-bonded: Cys337-Cys342 and Cys391-Cys414. 2 N-linked (GlcNAc...) asparagine glycosylation sites follow: Asn428 and Asn457. The helical transmembrane segment at 479 to 499 (GLMVLFSLLLVAVAITGLFIY) threads the bilayer. Residues 500–510 (SKPSYFWKEAV) lie on the Cytoplasmic side of the membrane.

It belongs to the GDA1/CD39 NTPase family. In terms of assembly, homodimer; disulfide-linked. It depends on Ca(2+) as a cofactor. The cofactor is Mg(2+). N-glycosylated. Post-translationally, the N-terminus is blocked. In terms of processing, palmitoylated on Cys-13; which is required for caveola targeting.

Its subcellular location is the membrane. It localises to the caveola. The catalysed reaction is a ribonucleoside 5'-triphosphate + 2 H2O = a ribonucleoside 5'-phosphate + 2 phosphate + 2 H(+). The enzyme catalyses a ribonucleoside 5'-triphosphate + H2O = a ribonucleoside 5'-diphosphate + phosphate + H(+). It carries out the reaction a ribonucleoside 5'-diphosphate + H2O = a ribonucleoside 5'-phosphate + phosphate + H(+). It catalyses the reaction ATP + 2 H2O = AMP + 2 phosphate + 2 H(+). The catalysed reaction is ATP + H2O = ADP + phosphate + H(+). The enzyme catalyses ADP + H2O = AMP + phosphate + H(+). It carries out the reaction CTP + 2 H2O = CMP + 2 phosphate + 2 H(+). It catalyses the reaction CTP + H2O = CDP + phosphate + H(+). The catalysed reaction is CDP + H2O = CMP + phosphate + H(+). The enzyme catalyses GTP + 2 H2O = GMP + 2 phosphate + 2 H(+). It carries out the reaction GTP + H2O = GDP + phosphate + H(+). It catalyses the reaction GDP + H2O = GMP + phosphate + H(+). The catalysed reaction is ITP + 2 H2O = IMP + 2 phosphate + 2 H(+). The enzyme catalyses ITP + H2O = IDP + phosphate + H(+). It carries out the reaction IDP + H2O = IMP + phosphate + H(+). It catalyses the reaction UTP + 2 H2O = UMP + 2 phosphate + 2 H(+). The catalysed reaction is UTP + H2O = UDP + phosphate + H(+). The enzyme catalyses UDP + H2O = UMP + phosphate + H(+). Its function is as follows. Catalyzes the hydrolysis of both di- and triphosphate nucleotides (NDPs and NTPs) and hydrolyze NTPs to nucleotide monophosphates (NMPs) in two distinct successive phosphate-releasing steps, with NDPs as intermediates and participates in the regulation of extracellular levels of nucleotides. By hydrolyzing proinflammatory ATP and platelet-activating ADP to AMP, it blocks platelet aggregation and supports blood flow. This is Ectonucleoside triphosphate diphosphohydrolase 1 from Mus musculus (Mouse).